Consider the following 419-residue polypeptide: 3-phosphoshikimate 1-carboxyvinyltransferase (419 aa).

Positions 21, 22, and 26 each coordinate 3-phosphoshikimate. Lys21 lines the phosphoenolpyruvate pocket. Phosphoenolpyruvate contacts are provided by Gly91 and Arg119. 3-phosphoshikimate is bound by residues Ser164, Ser165, Gln166, Ser191, Asp305, and Lys332. Gln166 lines the phosphoenolpyruvate pocket. Asp305 serves as the catalytic Proton acceptor. Arg336 and Arg376 together coordinate phosphoenolpyruvate.

This sequence belongs to the EPSP synthase family. Monomer.

It localises to the cytoplasm. It carries out the reaction 3-phosphoshikimate + phosphoenolpyruvate = 5-O-(1-carboxyvinyl)-3-phosphoshikimate + phosphate. Its pathway is metabolic intermediate biosynthesis; chorismate biosynthesis. Catalyzes the transfer of the enolpyruvyl moiety of phosphoenolpyruvate (PEP) to the 5-hydroxyl of shikimate-3-phosphate (S3P) to produce enolpyruvyl shikimate-3-phosphate and inorganic phosphate. This is 3-phosphoshikimate 1-carboxyvinyltransferase from Methanothermobacter thermautotrophicus (strain ATCC 29096 / DSM 1053 / JCM 10044 / NBRC 100330 / Delta H) (Methanobacterium thermoautotrophicum).